A 104-amino-acid polypeptide reads, in one-letter code: Large ribosomal subunit protein uL24 (104 aa).

The protein belongs to the universal ribosomal protein uL24 family. In terms of assembly, part of the 50S ribosomal subunit.

In terms of biological role, one of two assembly initiator proteins, it binds directly to the 5'-end of the 23S rRNA, where it nucleates assembly of the 50S subunit. Functionally, one of the proteins that surrounds the polypeptide exit tunnel on the outside of the subunit. The protein is Large ribosomal subunit protein uL24 of Nitrobacter hamburgensis (strain DSM 10229 / NCIMB 13809 / X14).